The sequence spans 77 residues: Membrane-associated ATPase epsilon chain (77 aa).

To E.hirae NtpH. In terms of assembly, sul-ATPase is composed of six (or maybe five) subunits: alpha, beta, delta, gamma, C (proteolipid), and possibly epsilon.

The enzyme catalyses ATP + H2O + 4 H(+)(in) = ADP + phosphate + 5 H(+)(out). This chain is Membrane-associated ATPase epsilon chain (atpE), found in Sulfolobus acidocaldarius (strain ATCC 33909 / DSM 639 / JCM 8929 / NBRC 15157 / NCIMB 11770).